Reading from the N-terminus, the 296-residue chain is Glycine--tRNA ligase alpha subunit (296 aa).

This sequence belongs to the class-II aminoacyl-tRNA synthetase family. As to quaternary structure, tetramer of two alpha and two beta subunits.

The protein resides in the cytoplasm. The catalysed reaction is tRNA(Gly) + glycine + ATP = glycyl-tRNA(Gly) + AMP + diphosphate. The chain is Glycine--tRNA ligase alpha subunit from Francisella philomiragia subsp. philomiragia (strain ATCC 25017 / CCUG 19701 / FSC 153 / O#319-036).